The sequence spans 205 residues: Holliday junction branch migration complex subunit RuvA (205 aa).

The interval 1-64 (MIGKLTGLVD…EDAIRLFGFP (64 aa)) is domain I. The interval 65–143 (SEVERDWFRL…ALGPVDSLTA (79 aa)) is domain II. Positions 144 to 153 (KLTIAEAEGT) are flexible linker. Positions 153–205 (TAPVAAQDAITALVNLGYGRPQAAAAVATSLEALGETAPLADLIRRGLKELAR) are domain III.

It belongs to the RuvA family. In terms of assembly, homotetramer. Forms an RuvA(8)-RuvB(12)-Holliday junction (HJ) complex. HJ DNA is sandwiched between 2 RuvA tetramers; dsDNA enters through RuvA and exits via RuvB. An RuvB hexamer assembles on each DNA strand where it exits the tetramer. Each RuvB hexamer is contacted by two RuvA subunits (via domain III) on 2 adjacent RuvB subunits; this complex drives branch migration. In the full resolvosome a probable DNA-RuvA(4)-RuvB(12)-RuvC(2) complex forms which resolves the HJ.

It localises to the cytoplasm. Its function is as follows. The RuvA-RuvB-RuvC complex processes Holliday junction (HJ) DNA during genetic recombination and DNA repair, while the RuvA-RuvB complex plays an important role in the rescue of blocked DNA replication forks via replication fork reversal (RFR). RuvA specifically binds to HJ cruciform DNA, conferring on it an open structure. The RuvB hexamer acts as an ATP-dependent pump, pulling dsDNA into and through the RuvAB complex. HJ branch migration allows RuvC to scan DNA until it finds its consensus sequence, where it cleaves and resolves the cruciform DNA. The polypeptide is Holliday junction branch migration complex subunit RuvA (Beijerinckia indica subsp. indica (strain ATCC 9039 / DSM 1715 / NCIMB 8712)).